The primary structure comprises 344 residues: UDP-3-O-acylglucosamine N-acyltransferase (344 aa).

His248 serves as the catalytic Proton acceptor.

This sequence belongs to the transferase hexapeptide repeat family. LpxD subfamily. As to quaternary structure, homotrimer.

The enzyme catalyses a UDP-3-O-[(3R)-3-hydroxyacyl]-alpha-D-glucosamine + a (3R)-hydroxyacyl-[ACP] = a UDP-2-N,3-O-bis[(3R)-3-hydroxyacyl]-alpha-D-glucosamine + holo-[ACP] + H(+). It functions in the pathway bacterial outer membrane biogenesis; LPS lipid A biosynthesis. Its function is as follows. Catalyzes the N-acylation of UDP-3-O-acylglucosamine using 3-hydroxyacyl-ACP as the acyl donor. Is involved in the biosynthesis of lipid A, a phosphorylated glycolipid that anchors the lipopolysaccharide to the outer membrane of the cell. In Prochlorococcus marinus (strain MIT 9515), this protein is UDP-3-O-acylglucosamine N-acyltransferase.